Consider the following 38-residue polypeptide: Large ribosomal subunit protein bL36 (38 aa).

The protein belongs to the bacterial ribosomal protein bL36 family.

The protein is Large ribosomal subunit protein bL36 of Lacticaseibacillus casei (strain BL23) (Lactobacillus casei).